Reading from the N-terminus, the 550-residue chain is Glucose-6-phosphate isomerase (550 aa).

The Proton donor role is filled by E357. Residues H388 and K516 contribute to the active site.

It belongs to the GPI family.

The protein localises to the cytoplasm. The catalysed reaction is alpha-D-glucose 6-phosphate = beta-D-fructose 6-phosphate. The protein operates within carbohydrate biosynthesis; gluconeogenesis. Its pathway is carbohydrate degradation; glycolysis; D-glyceraldehyde 3-phosphate and glycerone phosphate from D-glucose: step 2/4. Its function is as follows. Catalyzes the reversible isomerization of glucose-6-phosphate to fructose-6-phosphate. In Psychromonas ingrahamii (strain DSM 17664 / CCUG 51855 / 37), this protein is Glucose-6-phosphate isomerase.